The sequence spans 450 residues: UDP-N-acetylmuramoylalanine--D-glutamate ligase (450 aa).

119–125 (GSNGKTT) contributes to the ATP binding site.

The protein belongs to the MurCDEF family.

Its subcellular location is the cytoplasm. The enzyme catalyses UDP-N-acetyl-alpha-D-muramoyl-L-alanine + D-glutamate + ATP = UDP-N-acetyl-alpha-D-muramoyl-L-alanyl-D-glutamate + ADP + phosphate + H(+). It participates in cell wall biogenesis; peptidoglycan biosynthesis. Cell wall formation. Catalyzes the addition of glutamate to the nucleotide precursor UDP-N-acetylmuramoyl-L-alanine (UMA). This Bacillus thuringiensis (strain Al Hakam) protein is UDP-N-acetylmuramoylalanine--D-glutamate ligase.